Consider the following 126-residue polypeptide: Small ribosomal subunit protein uS13 (126 aa).

The disordered stretch occupies residues 96-126 (PVRGQRTRTNARTRRGSRRTVAGKKKPAAKK). The segment covering 100-126 (QRTRTNARTRRGSRRTVAGKKKPAAKK) has biased composition (basic residues).

It belongs to the universal ribosomal protein uS13 family. In terms of assembly, part of the 30S ribosomal subunit. Forms a loose heterodimer with protein S19. Forms two bridges to the 50S subunit in the 70S ribosome.

In terms of biological role, located at the top of the head of the 30S subunit, it contacts several helices of the 16S rRNA. In the 70S ribosome it contacts the 23S rRNA (bridge B1a) and protein L5 of the 50S subunit (bridge B1b), connecting the 2 subunits; these bridges are implicated in subunit movement. Contacts the tRNAs in the A and P-sites. This chain is Small ribosomal subunit protein uS13, found in Thermosynechococcus vestitus (strain NIES-2133 / IAM M-273 / BP-1).